The sequence spans 497 residues: Glycerol kinase (497 aa).

Position 12 (Thr-12) interacts with ADP. Residues Thr-12, Thr-13, and Ser-14 each contribute to the ATP site. Thr-12 is a binding site for sn-glycerol 3-phosphate. Arg-16 lines the ADP pocket. Positions 82, 83, 134, and 243 each coordinate sn-glycerol 3-phosphate. Residues Arg-82, Glu-83, Tyr-134, Asp-243, and Gln-244 each contribute to the glycerol site. Residues Thr-265 and Gly-308 each coordinate ADP. 4 residues coordinate ATP: Thr-265, Gly-308, Gln-312, and Gly-409. 2 residues coordinate ADP: Gly-409 and Asn-413.

The protein belongs to the FGGY kinase family. In terms of assembly, homotetramer and homodimer (in equilibrium).

It carries out the reaction glycerol + ATP = sn-glycerol 3-phosphate + ADP + H(+). Its pathway is polyol metabolism; glycerol degradation via glycerol kinase pathway; sn-glycerol 3-phosphate from glycerol: step 1/1. With respect to regulation, activated by phosphorylation and inhibited by fructose 1,6-bisphosphate (FBP). Its function is as follows. Key enzyme in the regulation of glycerol uptake and metabolism. Catalyzes the phosphorylation of glycerol to yield sn-glycerol 3-phosphate. The protein is Glycerol kinase of Caldanaerobacter subterraneus subsp. tengcongensis (strain DSM 15242 / JCM 11007 / NBRC 100824 / MB4) (Thermoanaerobacter tengcongensis).